The sequence spans 550 residues: Cytochrome P450 monooxygenase hasH (550 aa).

Residues 39–59 (IGVLASIVVLVTVVIGPKAVI) form a helical membrane-spanning segment. A heme-binding site is contributed by cysteine 493.

It belongs to the cytochrome P450 family. The cofactor is heme.

Its subcellular location is the membrane. It functions in the pathway secondary metabolite biosynthesis. Functionally, cytochrome P450 monooxygenase; part of the gene cluster that mediates the biosynthesis of hexadehydro-astechrome (HAS), a tryptophan-derived iron(III)-complex that acts as a virulence factor in infected mice. Within the pathway, hasH, with the O-methyltransferase hasC and the FAD-linked oxidoreductase hasG, convert the hasE-prenylated Trp-Ala dipeptide into an O-methylated diketopiperazine that is then released from the hasD NRPS. The HAS biosynthesis begins with the synthesis of a tethered Trp-Ala dipeptide by the NRPS hasD. The 7-dimethylallyltryptophan synthase hasE then catalyzes the prenylation of the hasD-tethered tryptophan or the resulting tethered Trp-Ala dipeptide at the C-7 position of the indole moiety. HAS biosynthesis continues via tethered intermediates with the succesive action of the cytochrome P450 monooxygenase hasH, the O-methyltransferase hasC, and the FAD-linked oxidoreductase hasG. The resulting O-methylated diketopiperazine is then released from hasD. Finally, three O-methylated diketopiperazine molecules assemble in a trimeric complex with Fe(III) to produce hexadehydro-astechrome. The protein is Cytochrome P450 monooxygenase hasH of Aspergillus fumigatus (strain CBS 144.89 / FGSC A1163 / CEA10) (Neosartorya fumigata).